The sequence spans 209 residues: Ribonuclease HII (209 aa).

In terms of domain architecture, RNase H type-2 spans 18–209; the sequence is GLIAGVDEVG…FKPVKALLEG (192 aa). A divalent metal cation-binding residues include Asp-24, Glu-25, and Asp-116.

This sequence belongs to the RNase HII family. Requires Mn(2+) as cofactor. It depends on Mg(2+) as a cofactor.

The protein resides in the cytoplasm. The catalysed reaction is Endonucleolytic cleavage to 5'-phosphomonoester.. Endonuclease that specifically degrades the RNA of RNA-DNA hybrids. The sequence is that of Ribonuclease HII from Shewanella putrefaciens (strain CN-32 / ATCC BAA-453).